Reading from the N-terminus, the 198-residue chain is Large ribosomal subunit protein bL25 (198 aa).

It belongs to the bacterial ribosomal protein bL25 family. CTC subfamily. As to quaternary structure, part of the 50S ribosomal subunit; part of the 5S rRNA/L5/L18/L25 subcomplex. Contacts the 5S rRNA. Binds to the 5S rRNA independently of L5 and L18.

Functionally, this is one of the proteins that binds to the 5S RNA in the ribosome where it forms part of the central protuberance. This Nitrosomonas europaea (strain ATCC 19718 / CIP 103999 / KCTC 2705 / NBRC 14298) protein is Large ribosomal subunit protein bL25.